The primary structure comprises 256 residues: Phosphate import ATP-binding protein PstB (256 aa).

An ABC transporter domain is found at 10 to 251; sequence IRTVNVNFYY…PEQKQTEDYI (242 aa). ATP is bound at residue 42-49; it reads GPSGCGKS.

It belongs to the ABC transporter superfamily. Phosphate importer (TC 3.A.1.7) family. In terms of assembly, the complex is composed of two ATP-binding proteins (PstB), two transmembrane proteins (PstC and PstA) and a solute-binding protein (PstS).

The protein resides in the cell inner membrane. The enzyme catalyses phosphate(out) + ATP + H2O = ADP + 2 phosphate(in) + H(+). Part of the ABC transporter complex PstSACB involved in phosphate import. Responsible for energy coupling to the transport system. The protein is Phosphate import ATP-binding protein PstB of Syntrophus aciditrophicus (strain SB).